Consider the following 273-residue polypeptide: Putative carboxymethylenebutenolidase (273 aa).

Active-site residues include cysteine 130, aspartate 191, and histidine 223.

Belongs to the dienelactone hydrolase family.

It carries out the reaction 2-(5-oxo-2,5-dihydrofuran-2-ylidene)acetate + H2O = 4-oxohex-2-enedioate + H(+). The polypeptide is Putative carboxymethylenebutenolidase (Saccharomyces cerevisiae (strain ATCC 204508 / S288c) (Baker's yeast)).